An 819-amino-acid polypeptide reads, in one-letter code: Transferrin 2 (819 aa).

The first 21 residues, 1–21, serve as a signal peptide directing secretion; it reads MASSLVFVALVGALCFTLANA. Residues 33–373 form the Transferrin-like 1 domain; the sequence is MVWCTKSQAE…QYDQYRSERL (341 aa). Disulfide bonds link Cys-36-Cys-78 and Cys-46-Cys-69. 2 N-linked (GlcNAc...) asparagine glycosylation sites follow: Asn-48 and Asn-66. Asp-93 and Tyr-121 together coordinate Fe(3+). 3 disulfides stabilise this stretch: Cys-147–Cys-237, Cys-190–Cys-213, and Cys-273–Cys-287. Residues Ala-155 and Gly-156 each contribute to the hydrogencarbonate site. N-linked (GlcNAc...) asparagine glycosylation is present at Asn-187. Tyr-231 contributes to the Fe(3+) binding site. The interval 325-361 is disordered; the sequence is GTRDDQSRQGGQSFNSRNNINDQNAYGQFDNNDPYRT. Residues 332–361 are compositionally biased toward polar residues; the sequence is RQGGQSFNSRNNINDQNAYGQFDNNDPYRT. N-linked (GlcNAc...) asparagine glycosylation is present at Asn-388. Positions 450–796 constitute a Transferrin-like 2 domain; that stretch reads MTLCVTSENE…FMRARRITDC (347 aa). Cystine bridges form between Cys-453–Cys-490 and Cys-463–Cys-481. 2 residues coordinate Fe(3+): Asp-505 and Tyr-533. 4 disulfide bridges follow: Cys-557–Cys-646, Cys-599–Cys-621, Cys-618–Cys-629, and Cys-687–Cys-701. 3 residues coordinate hydrogencarbonate: Thr-559, Ala-565, and Gly-566. An N-linked (GlcNAc...) asparagine glycan is attached at Asn-720. Cys-796 carries GPI-anchor amidated cysteine lipidation. Residues 797–819 constitute a propeptide, removed in mature form; that stretch reads YAGASQLALSVGLLLVGSLVAML.

It belongs to the transferrin family. In terms of assembly, forms a complex composed of septa junction proteins Nrx-IV/Nrx, Tsf2/MTf, Cont and Nrg during late embryogenesis.

It is found in the apicolateral cell membrane. The protein resides in the cell junction. It localises to the septate junction. Iron-binding protein and component of septate junctions that form the paracellular permeability barrier in epithelial tissues. In an iron-dependent manner, required for septate junction assembly during epithelial maturation in embryos and mature septa junctions stability. This Drosophila melanogaster (Fruit fly) protein is Transferrin 2.